We begin with the raw amino-acid sequence, 440 residues long: Trigger factor (440 aa).

A PPIase FKBP-type domain is found at 161–257 (GDYVKLAYEG…VLEVRERVLP (97 aa)).

The protein belongs to the FKBP-type PPIase family. Tig subfamily.

It localises to the cytoplasm. It catalyses the reaction [protein]-peptidylproline (omega=180) = [protein]-peptidylproline (omega=0). Functionally, involved in protein export. Acts as a chaperone by maintaining the newly synthesized protein in an open conformation. Functions as a peptidyl-prolyl cis-trans isomerase. This is Trigger factor from Opitutus terrae (strain DSM 11246 / JCM 15787 / PB90-1).